The primary structure comprises 490 residues: GTPase Der (490 aa).

EngA-type G domains follow at residues 3 to 166 and 203 to 376; these read PVVA…MEDL and IKLA…DSST. GTP contacts are provided by residues 9–16, 56–60, 118–121, 209–216, 256–260, and 321–324; these read GRPNVGKS, DTGGI, NKTD, DTAGV, and NKWD. One can recognise a KH-like domain in the interval 377–461; that stretch reads RRVGTSMLTR…PIRIQFKEGE (85 aa).

Belongs to the TRAFAC class TrmE-Era-EngA-EngB-Septin-like GTPase superfamily. EngA (Der) GTPase family. In terms of assembly, associates with the 50S ribosomal subunit.

In terms of biological role, GTPase that plays an essential role in the late steps of ribosome biogenesis. The protein is GTPase Der of Escherichia coli O17:K52:H18 (strain UMN026 / ExPEC).